A 362-amino-acid polypeptide reads, in one-letter code: Ferrochelatase (362 aa).

Residues His-228 and Glu-309 each coordinate Fe cation.

This sequence belongs to the ferrochelatase family.

It is found in the cytoplasm. It carries out the reaction heme b + 2 H(+) = protoporphyrin IX + Fe(2+). The protein operates within porphyrin-containing compound metabolism; protoheme biosynthesis; protoheme from protoporphyrin-IX: step 1/1. Catalyzes the ferrous insertion into protoporphyrin IX. This chain is Ferrochelatase, found in Bordetella pertussis (strain Tohama I / ATCC BAA-589 / NCTC 13251).